The following is a 551-amino-acid chain: Serine/threonine-protein kinase ppk21 (551 aa).

Positions 24–43 are disordered; the sequence is EARGERNPVKPQSSNVVPGT. The region spanning 55 to 315 is the Protein kinase domain; sequence YVFGDIIGDG…TQQIKQFPFF (261 aa). ATP contacts are provided by residues 65–67 and Lys-84; that span reads SFS. Residues 86–131 are PIF-pocket; sequence LDKKYIVKENKVKYVNIERDSMMRLNGFPGISRLFHTFQDDLKLYY. Residues 134–136 and Glu-140 contribute to the ATP site; that span reads ELA. Asp-179 serves as the catalytic Proton acceptor. Residues Glu-183 and Asp-197 each contribute to the ATP site. Ser-220 carries the post-translational modification Phosphoserine; by autocatalysis. Position 538 is a phosphoserine (Ser-538).

It belongs to the protein kinase superfamily. AGC Ser/Thr protein kinase family. PDPK1 subfamily.

It localises to the cytoplasm. The protein resides in the nucleus. Its subcellular location is the cytoskeleton. The protein localises to the microtubule organizing center. It is found in the spindle pole body. It catalyses the reaction L-seryl-[protein] + ATP = O-phospho-L-seryl-[protein] + ADP + H(+). It carries out the reaction L-threonyl-[protein] + ATP = O-phospho-L-threonyl-[protein] + ADP + H(+). In Schizosaccharomyces pombe (strain 972 / ATCC 24843) (Fission yeast), this protein is Serine/threonine-protein kinase ppk21 (ppk21).